Consider the following 313-residue polypeptide: D-alanine--D-alanine ligase (313 aa).

The ATP-grasp domain occupies 111–306; the sequence is KQVWHSLGLP…FQQLVLAILA (196 aa). 137–192 is an ATP binding site; that stretch reads AAELGFPLIVKPAHEGSSIGMAKVESVEALIAAWQDAARYDSQVLVEQWIAGPEYT. Residues aspartate 260, glutamate 273, and asparagine 275 each contribute to the Mg(2+) site.

The protein belongs to the D-alanine--D-alanine ligase family. Requires Mg(2+) as cofactor. Mn(2+) serves as cofactor.

The protein resides in the cytoplasm. The catalysed reaction is 2 D-alanine + ATP = D-alanyl-D-alanine + ADP + phosphate + H(+). The protein operates within cell wall biogenesis; peptidoglycan biosynthesis. Its function is as follows. Cell wall formation. In Ectopseudomonas mendocina (strain ymp) (Pseudomonas mendocina), this protein is D-alanine--D-alanine ligase.